The sequence spans 673 residues: F420-dependent formate dehydrogenase subunit alpha (673 aa).

Residues 3–59 (FKIVNTICPYCGVGCGLGLVVKDGRVIGIHPNKRHPINEGKLCAKGNYCYQFIHSKD) form the 4Fe-4S Mo/W bis-MGD-type domain. The [4Fe-4S] cluster site is built by C10, C13, C17, and C45. A non-standard amino acid (selenocysteine) is located at residue U131.

The protein belongs to the prokaryotic molybdopterin-containing oxidoreductase family. As to quaternary structure, dimer of an alpha (FdhA) and a beta (FdhB) subunit. [4Fe-4S] cluster is required as a cofactor. It depends on Mo-bis(molybdopterin guanine dinucleotide) as a cofactor. The cofactor is Zn(2+).

It catalyses the reaction oxidized coenzyme F420-(gamma-L-Glu)(n) + formate + 2 H(+) = reduced coenzyme F420-(gamma-L-Glu)(n) + CO2. Its function is as follows. Catalyzes the oxidation of formate to carbon dioxide, with coenzyme F420 as the electron acceptor. The chain is F420-dependent formate dehydrogenase subunit alpha (fdhA) from Methanocaldococcus jannaschii (strain ATCC 43067 / DSM 2661 / JAL-1 / JCM 10045 / NBRC 100440) (Methanococcus jannaschii).